A 505-amino-acid polypeptide reads, in one-letter code: 2-isopropylmalate synthase (505 aa).

Positions 5 to 267 (VYIFDTTLRD…YTNIKTEEIY (263 aa)) constitute a Pyruvate carboxyltransferase domain. Residues Asp14, His202, His204, and Asn238 each coordinate Mn(2+). Positions 391–505 (TLEYLHISSG…VNKLIWDSQK (115 aa)) are regulatory domain.

It belongs to the alpha-IPM synthase/homocitrate synthase family. LeuA type 1 subfamily. Homodimer. Requires Mn(2+) as cofactor.

The protein resides in the cytoplasm. It carries out the reaction 3-methyl-2-oxobutanoate + acetyl-CoA + H2O = (2S)-2-isopropylmalate + CoA + H(+). It functions in the pathway amino-acid biosynthesis; L-leucine biosynthesis; L-leucine from 3-methyl-2-oxobutanoate: step 1/4. Functionally, catalyzes the condensation of the acetyl group of acetyl-CoA with 3-methyl-2-oxobutanoate (2-ketoisovalerate) to form 3-carboxy-3-hydroxy-4-methylpentanoate (2-isopropylmalate). This Pelotomaculum thermopropionicum (strain DSM 13744 / JCM 10971 / SI) protein is 2-isopropylmalate synthase.